The chain runs to 232 residues: Ribose-5-phosphate isomerase A (232 aa).

Substrate contacts are provided by residues 29 to 32 (SGST), 86 to 89 (DGAD), and 99 to 102 (KGGG). Glu-108 acts as the Proton acceptor in catalysis. Substrate is bound at residue Lys-126.

Belongs to the ribose 5-phosphate isomerase family. Homodimer.

It carries out the reaction aldehydo-D-ribose 5-phosphate = D-ribulose 5-phosphate. It functions in the pathway carbohydrate degradation; pentose phosphate pathway; D-ribose 5-phosphate from D-ribulose 5-phosphate (non-oxidative stage): step 1/1. Functionally, catalyzes the reversible conversion of ribose-5-phosphate to ribulose 5-phosphate. This Synechococcus sp. (strain ATCC 27144 / PCC 6301 / SAUG 1402/1) (Anacystis nidulans) protein is Ribose-5-phosphate isomerase A.